Consider the following 348-residue polypeptide: Tetraacyldisaccharide 4'-kinase (348 aa).

50–57 (TMGGTGKT) contacts ATP.

It belongs to the LpxK family.

The enzyme catalyses a lipid A disaccharide + ATP = a lipid IVA + ADP + H(+). It participates in glycolipid biosynthesis; lipid IV(A) biosynthesis; lipid IV(A) from (3R)-3-hydroxytetradecanoyl-[acyl-carrier-protein] and UDP-N-acetyl-alpha-D-glucosamine: step 6/6. In terms of biological role, transfers the gamma-phosphate of ATP to the 4'-position of a tetraacyldisaccharide 1-phosphate intermediate (termed DS-1-P) to form tetraacyldisaccharide 1,4'-bis-phosphate (lipid IVA). The chain is Tetraacyldisaccharide 4'-kinase from Desulfotalea psychrophila (strain LSv54 / DSM 12343).